Here is an 83-residue protein sequence, read N- to C-terminus: EVPANAVTESDPTAVALKYHRNAEASERVAAARPGLPPEEQHCENCQFMLPDQGADEWRGCSLFPGKLINLDGWCASWTLRAG.

[4Fe-4S] cluster contacts are provided by Cys43, Cys46, Cys61, and Cys75.

Belongs to the high-potential iron-sulfur protein (HiPIP) family. As to quaternary structure, homodimer.

It localises to the periplasm. Specific class of high-redox-potential 4Fe-4S ferredoxins. Functions in anaerobic electron transport in most purple and in some other photosynthetic bacteria and in at least one genus (Paracoccus) of halophilic, denitrifying bacteria. The protein is High-potential iron-sulfur protein (hip) of Marichromatium gracile (Chromatium gracile).